We begin with the raw amino-acid sequence, 185 residues long: Dihydrofolate reductase 1 (185 aa).

The 178-residue stretch at 8-185 (ELVLVVAADE…QASPRPLDDL (178 aa)) folds into the DHFR domain.

It belongs to the dihydrofolate reductase family.

It catalyses the reaction (6S)-5,6,7,8-tetrahydrofolate + NADP(+) = 7,8-dihydrofolate + NADPH + H(+). It participates in cofactor biosynthesis; tetrahydrofolate biosynthesis; 5,6,7,8-tetrahydrofolate from 7,8-dihydrofolate: step 1/1. In terms of biological role, key enzyme in folate metabolism. Catalyzes an essential reaction for de novo glycine and purine synthesis, and for DNA precursor synthesis. This Haloarcula marismortui (strain ATCC 43049 / DSM 3752 / JCM 8966 / VKM B-1809) (Halobacterium marismortui) protein is Dihydrofolate reductase 1 (folA1).